Reading from the N-terminus, the 161-residue chain is Afimbrial adhesin AFA-I (161 aa).

The signal sequence occupies residues 1-21; it reads MKKLAIIGATSVMMMTGTAQA.

This sequence belongs to the Dr-adhesin family.

The protein resides in the fimbrium. Hemagglutinins of uropathogenic E.coli mediate adherence to the upper urinary tract. These adhesins bind to the Dr blood group antigen and also agglutinate human erythrocytes in the presence of D-mannose (mannose-resistant hemagglutination (MRHA)). The chain is Afimbrial adhesin AFA-I (afaE1) from Escherichia coli.